The primary structure comprises 405 residues: MGGPYIGIVADDLTGSGDTAVQFVRAGWATQLSVGGAEQALADPAVRQAEVLAVTTHSRPLAAADAAAVVRGEVERLRAAGVQRLYKKVDSTLRGAFKAEIDAARLAWGEDAIAVVCPAFPVTGRTVRQGVLYVGDRPVTETSAATDPVTPVTESHIPTLLGCAQLAAQAGETPAELARRIAAAAPVVVVDALDDADVQRLARAIGVLGQRAVPVGSGGLAAPLARVWAGGQAAGPVLVVVTSQHSAARQQAAALQQAGARTWAPTLAQLADDRNWAAWTAEVEAAEHGMPAVDALMLLAPEGRLAGLDADSVARRLGELAARLVLAHGAAGVVATGGDGASAVLAALQASGIALVDEVTGGVPLGTLTGGQAAGLPVVTKAGGFGEQDVLIRAAQAIRERRFTK.

Residues Asp-12, Arg-59, and 88–91 contribute to the substrate site; that span reads KVDS. ATP is bound by residues Ser-243, 337-340, and Gly-383; that span reads GGDG.

This sequence belongs to the four-carbon acid sugar kinase family.

It carries out the reaction D-threonate + ATP = 4-O-phospho-D-threonate + ADP + H(+). Functionally, catalyzes the ATP-dependent phosphorylation of D-threonate to D-threonate 4-phosphate. Can also phosphorylate 4-hydroxy-L-threonine, with lower efficiency. The polypeptide is D-threonate kinase (Bordetella bronchiseptica (strain ATCC BAA-588 / NCTC 13252 / RB50) (Alcaligenes bronchisepticus)).